Consider the following 89-residue polypeptide: Small ribosomal subunit protein bS20 (89 aa).

It belongs to the bacterial ribosomal protein bS20 family.

In terms of biological role, binds directly to 16S ribosomal RNA. This Phenylobacterium zucineum (strain HLK1) protein is Small ribosomal subunit protein bS20.